The sequence spans 124 residues: MTKTKGEKINKSAINEVVTRECTIHLAKRVHNIGFKKRAPRAIKEIRKFAEREMGTTDVRIDTRLNKHIWSKGIRSTPFRIRVRLARRRNDDEDSPNKLYTYVTYVPVSTFKNLQTENVESSDD.

Tyr102 carries the post-translational modification Phosphotyrosine.

It belongs to the eukaryotic ribosomal protein eL31 family.

This Drosophila melanogaster (Fruit fly) protein is Large ribosomal subunit protein eL31 (RpL31).